Consider the following 426-residue polypeptide: Histidine--tRNA ligase (426 aa).

The protein belongs to the class-II aminoacyl-tRNA synthetase family.

The protein resides in the cytoplasm. It carries out the reaction tRNA(His) + L-histidine + ATP = L-histidyl-tRNA(His) + AMP + diphosphate + H(+). The sequence is that of Histidine--tRNA ligase from Saccharolobus islandicus (strain Y.G.57.14 / Yellowstone #1) (Sulfolobus islandicus).